The sequence spans 326 residues: GMP reductase (326 aa).

Cys175 (thioimidate intermediate) is an active-site residue. 204–227 (IIADGGIRTHGDIAKSVRFGATMV) contributes to the NADP(+) binding site.

Belongs to the IMPDH/GMPR family. GuaC type 2 subfamily.

It carries out the reaction IMP + NH4(+) + NADP(+) = GMP + NADPH + 2 H(+). Catalyzes the irreversible NADPH-dependent deamination of GMP to IMP. It functions in the conversion of nucleobase, nucleoside and nucleotide derivatives of G to A nucleotides, and in maintaining the intracellular balance of A and G nucleotides. This chain is GMP reductase, found in Bacillus licheniformis (strain ATCC 14580 / DSM 13 / JCM 2505 / CCUG 7422 / NBRC 12200 / NCIMB 9375 / NCTC 10341 / NRRL NRS-1264 / Gibson 46).